A 60-amino-acid chain; its full sequence is Cytotoxin 6 (60 aa).

4 disulfide bridges follow: cysteine 3-cysteine 21, cysteine 14-cysteine 38, cysteine 42-cysteine 53, and cysteine 54-cysteine 59.

Belongs to the three-finger toxin family. Short-chain subfamily. Type IA cytotoxin sub-subfamily. Monomer in solution; Homodimer and oligomer in the presence of negatively charged lipids forming a pore with a size ranging between 20 and 30 Angstroms. Expressed by the venom gland.

It localises to the secreted. The protein resides in the target cell membrane. Functionally, shows cytolytic activity on many different cells by forming pore in lipid membranes. In vivo, increases heart rate or kills the animal by cardiac arrest. In addition, it binds to heparin with high affinity, interacts with Kv channel-interacting protein 1 (KCNIP1) in a calcium-independent manner, and binds to integrin alpha-V/beta-3 (ITGAV/ITGB3) with moderate affinity. This chain is Cytotoxin 6, found in Naja annulifera (Banded Egyptian cobra).